The following is a 94-amino-acid chain: Protein canopy homolog 1 (94 aa).

It belongs to the canopy family.

In Mus musculus (Mouse), this protein is Protein canopy homolog 1 (Cnpy1).